The following is a 286-amino-acid chain: ATP synthase gamma chain (286 aa).

The protein belongs to the ATPase gamma chain family. F-type ATPases have 2 components, CF(1) - the catalytic core - and CF(0) - the membrane proton channel. CF(1) has five subunits: alpha(3), beta(3), gamma(1), delta(1), epsilon(1). CF(0) has three main subunits: a, b and c.

The protein resides in the cell membrane. In terms of biological role, produces ATP from ADP in the presence of a proton gradient across the membrane. The gamma chain is believed to be important in regulating ATPase activity and the flow of protons through the CF(0) complex. The protein is ATP synthase gamma chain of Bacillus cereus (strain G9842).